Here is a 384-residue protein sequence, read N- to C-terminus: Probable E3 ubiquitin-protein ligase rnf113 (384 aa).

Over residues 1–11 (MDLFRKPKKRN) the composition is skewed to basic residues. Positions 1–96 (MDLFRKPKKR…GPSGPRDQGA (96 aa)) are disordered. The span at 42-52 (PMVQSTKQLDA) shows a compositional bias: polar residues. Acidic residues predominate over residues 60 to 71 (SSDDSDDSDDNQ). The segment at 175–203 (DFAPDICKDYKETGFCTFGDSCKFVHDRS) adopts a C3H1-type zinc-finger fold. An RING-type zinc finger spans residues 241–279 (CFICGNPFVDPIVTKCKHYFCTGCALKSFQKSSKCPICQ). Residues 299–384 (KKQQQKQEAE…ESDDDDAEKD (86 aa)) are disordered. 2 stretches are compositionally biased toward basic and acidic residues: residues 303–312 (QKQEAEKQEE) and 320–334 (EKPH…HDHE). Residues 351–384 (EKSDEEQEIMMEDVEGLEGGENDSESDDDDAEKD) are compositionally biased toward acidic residues.

The enzyme catalyses S-ubiquitinyl-[E2 ubiquitin-conjugating enzyme]-L-cysteine + [acceptor protein]-L-lysine = [E2 ubiquitin-conjugating enzyme]-L-cysteine + N(6)-ubiquitinyl-[acceptor protein]-L-lysine.. It functions in the pathway protein modification; protein ubiquitination. In terms of biological role, may function as E3 ubiquitin-protein ligase that catalyzes the transfer of ubiquitin onto target proteins. May play a role in DNA repair via its role in the synthesis of 'Lys-63'-linked polyubiquitin chains that recruit proteins involved in repair to sites of DNA damage by alkylating agents. This is Probable E3 ubiquitin-protein ligase rnf113 (rnf-113) from Caenorhabditis elegans.